The chain runs to 387 residues: Putative purine permease 15 (387 aa).

10 consecutive transmembrane segments (helical) span residues 44–64, 84–104, 122–142, 150–169, 179–199, 210–230, 252–272, 306–326, 329–349, and 354–374; these read WVTI…ARLL, TLLQ…HFLI, LAIT…FSDV, VFTL…SKYY, FISL…FSAG, YGII…LCII, FVVV…ILVA, VAWQ…SAVF, VISV…YNTH, and VFRG…IYII.

This sequence belongs to the purine permeases (TC 2.A.7.14) family.

It is found in the membrane. The sequence is that of Putative purine permease 15 (PUP15) from Arabidopsis thaliana (Mouse-ear cress).